A 414-amino-acid polypeptide reads, in one-letter code: N-carbamoyl-L-amino-acid amidohydrolase (414 aa).

Residues H83, D94, E129, and H195 each coordinate a divalent metal cation. 5 residues coordinate an N-carbamoyl-L-alpha-amino acid: Q198, H231, N281, R294, and G363. Residues 214–333 (GIAGPSWFKV…QIEKNMAAVP (120 aa)) are involved in dimerization. H388 is an a divalent metal cation binding site.

It belongs to the peptidase M20 family. Homodimer. The cofactor is Mn(2+). Ni(2+) is required as a cofactor. It depends on Co(2+) as a cofactor. Fe(2+) serves as cofactor.

The enzyme catalyses an N-carbamoyl-L-alpha-amino acid + H2O + 2 H(+) = an L-alpha-amino acid + NH4(+) + CO2. It catalyses the reaction N-carbamoyl-L-methionine + H2O + 2 H(+) = L-methionine + NH4(+) + CO2. Functionally, catalyzes the hydrolysis of N-carbamoyl-L-alpha-amino acids to free L-alpha-amino acids. Is strictly L-specific since it is inactive toward N-carbamoyl-D-alpha-amino acids. The sequence is that of N-carbamoyl-L-amino-acid amidohydrolase from Pseudomonas sp. (strain NS671).